A 430-amino-acid polypeptide reads, in one-letter code: Trigger factor (430 aa).

Residues 163–248 (GNIAIIDFKG…IKDIKVKELP (86 aa)) form the PPIase FKBP-type domain.

It belongs to the FKBP-type PPIase family. Tig subfamily.

It localises to the cytoplasm. It catalyses the reaction [protein]-peptidylproline (omega=180) = [protein]-peptidylproline (omega=0). Involved in protein export. Acts as a chaperone by maintaining the newly synthesized protein in an open conformation. Functions as a peptidyl-prolyl cis-trans isomerase. This chain is Trigger factor, found in Clostridium botulinum (strain Kyoto / Type A2).